Reading from the N-terminus, the 23-residue chain is GVSKILHSAGKFGKAFLGEIMKS.

In terms of tissue distribution, expressed by the skin glands.

It is found in the secreted. Functionally, antimicrobial peptide. This Xenopus boumbaensis (Mawa clawed frog) protein is Magainin-BM2.